The following is a 457-amino-acid chain: Transmembrane protein 143 (457 aa).

2 consecutive transmembrane segments (helical) span residues 264–284 (ILNV…GMVV) and 285–305 (LSDL…FMGL). The residue at position 316 (S316) is a Phosphoserine. Residues 429-439 (LSSPKSAPSDD) are compositionally biased toward polar residues. A disordered region spans residues 429 to 457 (LSSPKSAPSDDNSLEKPLGPAQPSHLVGN).

The protein localises to the membrane. This chain is Transmembrane protein 143 (TMEM143), found in Bos taurus (Bovine).